Reading from the N-terminus, the 381-residue chain is MNLNFMPLLHAYNHASIDFHFNSSARDFCVHEVPLYEFSNTGEHAVIQVRKSGLSTLEMLQIFSQILGVRIAELGYAGLKDKNALTTQFISLPKKYAPLLEKNTSNFQEKNLKILSLNYHHNKIKLGHLKGNRFFMRFKKMTPLNAQKTEQVLEQIARFGMPNYFGPQRFGKFNDNHQEGLKILQNQTKFAHQKLNAFLISSYQSYLFNALLSKRLEISKIISAFSVKENLEFFKQKNLNINPNTLKALKNQAHPFKILEGDVMRHYPYGKFFDALELEKESERFLKKEAAPTGLLDGKKALYAKNLSLEIEKEFQHNLLSSHAKTLGSRRFFWVFAENVTSQYVKEKAQFELGFYLPKGSYASALLKEIKHEKGENNDEF.

Residue Asp-81 is the Nucleophile of the active site. The region spanning 160 to 335 (GMPNYFGPQR…TLGSRRFFWV (176 aa)) is the TRUD domain.

Belongs to the pseudouridine synthase TruD family.

The enzyme catalyses uridine(13) in tRNA = pseudouridine(13) in tRNA. Functionally, responsible for synthesis of pseudouridine from uracil-13 in transfer RNAs. In Helicobacter pylori (strain Shi470), this protein is tRNA pseudouridine synthase D.